Consider the following 499-residue polypeptide: Cytochrome P450 705A12 (499 aa).

A helical membrane pass occupies residues 4–24 (LIIVDFQNISIFILLCLFSFL). A heme-binding site is contributed by Cys439.

It belongs to the cytochrome P450 family. Requires heme as cofactor.

Its subcellular location is the membrane. Its function is as follows. May be involved in hydroxylation of the triterpene marneral. The chain is Cytochrome P450 705A12 from Arabidopsis thaliana (Mouse-ear cress).